Consider the following 92-residue polypeptide: C-C motif chemokine 3 (92 aa).

Positions 1–19 (MKVPGAALAVLLCTMSLCS) are cleaved as a signal peptide. Cystine bridges form between Cys33/Cys57 and Cys34/Cys73.

It belongs to the intercrine beta (chemokine CC) family. In terms of assembly, self-associates. Also heterodimer of MIP-1-alpha(4-69) and MIP-1-beta(3-69). Interacts with CCR1.

The protein localises to the secreted. Functionally, monokine with inflammatory and chemokinetic properties. Binds to CCR1, CCR4 and CCR5. One of the major HIV-suppressive factors produced by CD8+ T-cells. Recombinant MIP-1-alpha induces a dose-dependent inhibition of different strains of HIV-1, HIV-2, and simian immunodeficiency virus (SIV). The polypeptide is C-C motif chemokine 3 (CCL3) (Canis lupus familiaris (Dog)).